The sequence spans 150 residues: Catabolic 3-dehydroquinase (150 aa).

Tyrosine 24 functions as the Proton acceptor in the catalytic mechanism. Asparagine 75, histidine 81, and aspartate 88 together coordinate substrate. Histidine 101 functions as the Proton donor in the catalytic mechanism. Substrate contacts are provided by residues 102 to 103 and arginine 112; that span reads IS.

The protein belongs to the type-II 3-dehydroquinase family. As to quaternary structure, homododecamer. Adopts a ring-like structure, composed of an arrangement of two hexameric rings stacked on top of one another.

The catalysed reaction is 3-dehydroquinate = 3-dehydroshikimate + H2O. It participates in aromatic compound metabolism; 3,4-dihydroxybenzoate biosynthesis; 3,4-dihydroxybenzoate from 3-dehydroquinate: step 1/2. In terms of biological role, is involved in the catabolism of quinate. Allows the utilization of quinate as carbon source via the beta-ketoadipate pathway. The chain is Catabolic 3-dehydroquinase from Verticillium alfalfae (strain VaMs.102 / ATCC MYA-4576 / FGSC 10136) (Verticillium wilt of alfalfa).